Consider the following 509-residue polypeptide: Erythropoietin receptor (509 aa).

Residues 1–24 (MYHFGATLWPGVGSLCLLLAGATW) form the signal peptide. At 25 to 251 (APSPNSPDAK…SLLTASDLDP (227 aa)) the chain is on the extracellular side. Cystine bridges form between Cys-52–Cys-62 and Cys-91–Cys-107. A Fibronectin type-III domain is found at 148–248 (PPAGLLARRA…EPASLLTASD (101 aa)). Asn-184 carries an N-linked (GlcNAc...) asparagine glycan. The WSXWS motif signature appears at 234-238 (WSAWS). A helical transmembrane segment spans residues 252–274 (LILTLSLILVLILLLLAVLALLS). Residues 275 to 509 (HRRTLKQKIW…PSPPNYVTCS (235 aa)) lie on the Cytoplasmic side of the membrane. A Glycyl lysine isopeptide (Lys-Gly) (interchain with G-Cter in ubiquitin) cross-link involves residue Lys-282. Residues 283-291 (IWPGIPSPE) carry the Box 1 motif motif. Phosphotyrosine; by JAK2 occurs at positions 369 and 427. The ITIM motif motif lies at 453-458 (LKYLYL). A Glycyl lysine isopeptide (Lys-Gly) (interchain with G-Cter in ubiquitin) cross-link involves residue Lys-454. A phosphotyrosine; by JAK2 mark is found at Tyr-455, Tyr-457, Tyr-469, Tyr-486, Tyr-490, and Tyr-505. Residues 467-509 (TDYSSGGSQETQGGSSSGPYSNPYENSLVPAPEPSPPNYVTCS) form a disordered region. Low complexity predominate over residues 470–493 (SSGGSQETQGGSSSGPYSNPYENS).

It belongs to the type I cytokine receptor family. Type 1 subfamily. As to quaternary structure, forms homodimers on EPO stimulation. The tyrosine-phosphorylated form interacts with several SH2 domain-containing proteins including LYN, the adapter protein SH2B2, PTPN6, PTPN11, JAK2, PI3 kinases, STAT5A/B, SOCS3, CRKL. Interacts with INPP5D/SHIP1. SH2B2 binding inhibits the JAK-STAT signaling. Interacts with RHEX; this interaction occurs in a erythropoietin (EPO)-dependent manner. Interacts with ATXN2L. In terms of processing, on EPO stimulation, phosphorylated on C-terminal tyrosine residues by JAK2. The phosphotyrosine motifs are also recruitment sites for several SH2-containing proteins and adapter proteins which mediate cell proliferation. Phosphorylation on Tyr-455 is required for PTPN6 interaction, Tyr-427 for PTPN11. Tyr-427 is also required for SOCS3 binding, but Tyr-455/Tyr-457 motif is the preferred binding site. Ubiquitinated by the ECS(SOCS2) complex following ligand-binding and phosphorylation by JAK2, leading to its degradation by the proteasome. Regulation by the ECS(SOCS2) complex acts as a negative feedback loop of erythropoietin-mediated signaling pathway. Ubiquitination at Lys-282 mediates receptor internalization, whereas ubiquitination at Lys-454 promotes trafficking of activated receptors to the lysosomes for degradation. Ubiquitinated by NOSIP; appears to be either multi-monoubiquitinated or polyubiquitinated. Ubiquitination mediates proliferation and survival of EPO-dependent cells.

Its subcellular location is the cell membrane. Receptor for erythropoietin, which mediates erythropoietin-induced erythroblast proliferation and differentiation. Upon EPO stimulation, EPOR dimerizes triggering the JAK2/STAT5 signaling cascade. In some cell types, can also activate STAT1 and STAT3. May also activate the LYN tyrosine kinase. Its function is as follows. Isoform EPOR-T acts as a dominant-negative receptor of EPOR-mediated signaling. This chain is Erythropoietin receptor (EPOR), found in Sus scrofa (Pig).